The sequence spans 636 residues: MSKVIGIDLGTTNSCVAIMEGGEPIVIANSEGSRTTPSIVAFADNGERLVGQQAKRQAVTNPENTLYAIKRLIGRKFDTEAVKRDIAISPFKIVKADNNDAWVEARGKRYSPPEISAFVLQKMKQTAEDYLGQTVTDAVITVPAYFDDSQRQATKDAGKIAGLNVLRIINEPTAAALAYGLDKKKEEKVAVFDLGGGTFDISILELGDGVFEVKSTNGDTFLGGEDFDQLVIDWIADEFHKDQGINLRGDKMALQRLKEAAEKAKCELSSSMETDINLPFITADASGPKHLTMKLSRAKLETICGELLAKLEGPCRTAMKDAGLSASDIDEVILVGGMTRMPAVQKKVEAIFGKTPNRGVNPDEVVAIGAGIQGGVLKGDVKDVLLLDVTPLSLGIETLGGVMTKLIEKNTTIPCRKSQVFSTAADNQPAVSIHVLQGEREMSRDNKTLGNFELTGIPPAPRGIPQVEVTFDIDANGIVHVSAKDLGTGKEQSIRITASSGLSKEEIDKMVRDAESHADEDKKKRDAIEARNHADSMVYSTEKSLKEFGDKIDAVEKGNIENKIVELKKVMDGEDAEAIKKATDELAQAAHKLAEAMYAAKEQPGEHGETGSGEQARKESGKDENVVDADFEEVKK.

Thr198 bears the Phosphothreonine; by autocatalysis mark. The interval 598–636 (YAAKEQPGEHGETGSGEQARKESGKDENVVDADFEEVKK) is disordered. Over residues 603–625 (QPGEHGETGSGEQARKESGKDEN) the composition is skewed to basic and acidic residues. Residues 626–636 (VVDADFEEVKK) show a composition bias toward acidic residues.

This sequence belongs to the heat shock protein 70 family.

Its function is as follows. Acts as a chaperone. The protein is Chaperone protein DnaK of Pelobacter propionicus (strain DSM 2379 / NBRC 103807 / OttBd1).